We begin with the raw amino-acid sequence, 77 residues long: Apelin (77 aa).

The N-terminal stretch at 1-22 is a signal peptide; that stretch reads MNLRRCVQALLLLWLCLSAVCG. Residues 23 to 41 constitute a propeptide that is removed on maturation; it reads GPLLQTSDGKEMEEGTIRY. Residues 43–77 are disordered; it reads VQPRGPRSGPGPWQGGRRKFRRQRPRLSHKGPMPF. Over residues 58–71 the composition is skewed to basic residues; sequence GRRKFRRQRPRLSH. The residue at position 65 (Q65) is a Pyrrolidone carboxylic acid.

The protein belongs to the apelin family. In terms of processing, at least 5 active peptides may be produced by proteolytic processing of the peptide precursor.

It is found in the secreted. It localises to the extracellular space. Its function is as follows. Peptide hormone that functions as endogenous ligand for the G-protein-coupled apelin receptor (APLNR/APJ), that plays a role in cadiovascular homeostasis. Functions as a balanced agonist activating both G(i) protein pathway and beta-arrestin pathway of APLNR. Downstream G proteins activation, apelin can inhibit cAMP production and activate key intracellular effectors such as ERKs. On the other hand, APLNR activation induces beta-arrestin recruitment to the membrane leading to desensitization and internalization of the receptor. Apelin blunts cardiac hypertrophic induction from APLNR on response to pathological stimuli, but also induces myocardial hypertrophy under normal conditions. Apelin-36 dissociates more hardly than (pyroglu)apelin-13 from APLNR. Involved in the regulation of cardiac precursor cell movements during gastrulation and heart morphogenesis. Has an inhibitory effect on cytokine production in response to T-cell receptor/CD3 cross-linking; the oral intake of apelin in the colostrum and the milk might therefore modulate immune responses in neonates. Plays a role in early coronary blood vessels formation. Mediates myocardial contractility in an ERK1/2-dependent manner. May also have a role in the central control of body fluid homeostasis by influencing vasopressin release and drinking behavior. This is Apelin (APLN) from Bos taurus (Bovine).